We begin with the raw amino-acid sequence, 429 residues long: Adenylosuccinate synthetase (429 aa).

Residues 13-19 (GDEGKGK) and 41-43 (GHT) contribute to the GTP site. Catalysis depends on D14, which acts as the Proton acceptor. Residues D14 and G41 each coordinate Mg(2+). IMP is bound by residues 14-17 (DEGK), 39-42 (NAGH), T130, R144, Q225, T240, and R304. The Proton donor role is filled by H42. 300–306 (ATTGRRR) serves as a coordination point for substrate. GTP contacts are provided by residues R306, 332 to 334 (KLD), and 417 to 419 (STG).

This sequence belongs to the adenylosuccinate synthetase family. In terms of assembly, homodimer. The cofactor is Mg(2+).

It localises to the cytoplasm. It carries out the reaction IMP + L-aspartate + GTP = N(6)-(1,2-dicarboxyethyl)-AMP + GDP + phosphate + 2 H(+). It functions in the pathway purine metabolism; AMP biosynthesis via de novo pathway; AMP from IMP: step 1/2. In terms of biological role, plays an important role in the de novo pathway of purine nucleotide biosynthesis. Catalyzes the first committed step in the biosynthesis of AMP from IMP. The protein is Adenylosuccinate synthetase of Buchnera aphidicola subsp. Baizongia pistaciae (strain Bp).